Consider the following 333-residue polypeptide: Putative transporter MamV (333 aa).

5 helical membrane passes run 19–39 (AWLDMFTALALAVFKTALGVL), 86–106 (FLSANFIGISLMAGAAAMLWY), 111–131 (LGSGHVQVPEVWAVFGALISA), 170–190 (VLAGIVLSILGWVAADHLAAI), and 191–211 (LVSLLVLRIGAVIAWDSIHGL).

The protein belongs to the cation diffusion facilitator (CDF) transporter (TC 2.A.4) family.

The protein resides in the cell inner membrane. Functionally, expression of just the minimal mamAB gene cluster (amb0961 to amb0978), including this gene, is sufficient to form a minimal magnetosome chain with small magnetite particles. This Paramagnetospirillum magneticum (strain ATCC 700264 / AMB-1) (Magnetospirillum magneticum) protein is Putative transporter MamV.